A 740-amino-acid polypeptide reads, in one-letter code: Zn(2)-C6 fungal-type transcription factor mpsB (740 aa).

The segment at residues 25-46 is a DNA-binding region (zn(2)-C6 fungal-type); it reads RLKCDRNQPCSTCSHRGLSFSC. The segment at 625–645 is disordered; it reads SISTPSHDQDDLDGEAATEAT.

The protein localises to the nucleus. In terms of biological role, transcription factor; part of the gene cluster that mediates the biosynthesis of macrophasetins, 3-decalinoyltetramic acids (DTAs) which feature a tetramate (pyrrolidine-2,4-dione) unit connected to a decalin fragment and that have potent bioactivities. The chain is Zn(2)-C6 fungal-type transcription factor mpsB from Macrophomina phaseolina (strain MS6) (Charcoal rot fungus).